The following is a 252-amino-acid chain: UPF0246 protein AM1_4276 (252 aa).

This sequence belongs to the UPF0246 family.

In Acaryochloris marina (strain MBIC 11017), this protein is UPF0246 protein AM1_4276.